Consider the following 176-residue polypeptide: NAD(P)H-quinone oxidoreductase subunit 6, chloroplastic (176 aa).

5 consecutive transmembrane segments (helical) span residues 10-30 (ILVLFGGFGLLLGGLGVVLLT), 33-53 (IYSAFSLGLVLVCISLFYFLL), 60-80 (VAQLLIYVGAINVLIIFAVMF), 95-115 (IGDGFTLLLCITIPFSLMTTI), and 152-172 (FYLPFELISLILLVSLIGAIT).

It belongs to the complex I subunit 6 family. In terms of assembly, NDH is composed of at least 16 different subunits, 5 of which are encoded in the nucleus.

It localises to the plastid. It is found in the chloroplast thylakoid membrane. The enzyme catalyses a plastoquinone + NADH + (n+1) H(+)(in) = a plastoquinol + NAD(+) + n H(+)(out). The catalysed reaction is a plastoquinone + NADPH + (n+1) H(+)(in) = a plastoquinol + NADP(+) + n H(+)(out). In terms of biological role, NDH shuttles electrons from NAD(P)H:plastoquinone, via FMN and iron-sulfur (Fe-S) centers, to quinones in the photosynthetic chain and possibly in a chloroplast respiratory chain. The immediate electron acceptor for the enzyme in this species is believed to be plastoquinone. Couples the redox reaction to proton translocation, and thus conserves the redox energy in a proton gradient. The sequence is that of NAD(P)H-quinone oxidoreductase subunit 6, chloroplastic (ndhG) from Zea mays (Maize).